A 149-amino-acid chain; its full sequence is METQTSFINDGPKIHSNKLNQLDFLSGNNNNNRDNYYNNKNDKNSITHFNNYNYSGHSSYDNESARLIPISGNFKNESINKQRRKVVIARIFILLCLLICLGLALMGLFHYLITNDKRLDSISILFWSGSAFLIIVLIICLLARHCGSD.

A run of 2 helical transmembrane segments spans residues Ile-91–Tyr-111 and Ile-122–Leu-142.

It localises to the membrane. This is an uncharacterized protein from Dictyostelium discoideum (Social amoeba).